A 527-amino-acid polypeptide reads, in one-letter code: Glucose-6-phosphate isomerase (527 aa).

The active-site Proton donor is Glu-347. Catalysis depends on residues His-378 and Lys-493.

This sequence belongs to the GPI family.

Its subcellular location is the cytoplasm. The catalysed reaction is alpha-D-glucose 6-phosphate = beta-D-fructose 6-phosphate. It functions in the pathway carbohydrate biosynthesis; gluconeogenesis. It participates in carbohydrate degradation; glycolysis; D-glyceraldehyde 3-phosphate and glycerone phosphate from D-glucose: step 2/4. Its function is as follows. Catalyzes the reversible isomerization of glucose-6-phosphate to fructose-6-phosphate. This is Glucose-6-phosphate isomerase from Chlamydia caviae (strain ATCC VR-813 / DSM 19441 / 03DC25 / GPIC) (Chlamydophila caviae).